Consider the following 376-residue polypeptide: 3-dehydroquinate synthase (376 aa).

NAD(+) contacts are provided by residues 115-119, 139-140, Lys-152, and Lys-161; these read GVIGD and TS. Zn(2+) is bound by residues Glu-194, His-256, and His-275.

It belongs to the sugar phosphate cyclases superfamily. Dehydroquinate synthase family. It depends on Co(2+) as a cofactor. Zn(2+) is required as a cofactor. NAD(+) serves as cofactor.

It localises to the cytoplasm. The enzyme catalyses 7-phospho-2-dehydro-3-deoxy-D-arabino-heptonate = 3-dehydroquinate + phosphate. The protein operates within metabolic intermediate biosynthesis; chorismate biosynthesis; chorismate from D-erythrose 4-phosphate and phosphoenolpyruvate: step 2/7. Catalyzes the conversion of 3-deoxy-D-arabino-heptulosonate 7-phosphate (DAHP) to dehydroquinate (DHQ). This chain is 3-dehydroquinate synthase, found in Rhizobium leguminosarum bv. trifolii (strain WSM2304).